The primary structure comprises 218 residues: uncharacterized protein (218 aa).

Residues 1 to 24 (MAAQPQAPSAGGRPRAGKAVKSVA) form a disordered region. The 61-residue stretch at 28 to 88 (KLSRESIVEG…AVRIRVIDDI (61 aa)) folds into the HTH tetR-type domain. Positions 51-70 (TINALATQLGTKGPSLYNHV) form a DNA-binding region, H-T-H motif. Thr57 carries the post-translational modification Phosphothreonine; by PknH.

Post-translationally, phosphorylated on Thr-57 by PknH.

This is an uncharacterized protein from Mycobacterium tuberculosis (strain ATCC 25618 / H37Rv).